The sequence spans 88 residues: MLNTTFDQVMEFPNSCPFKVIGDADDTLADRVVAVAQQLAPGDYVPSVKASSKGSYYSVTIRITVTSKEHIEKAYIDLAAIEGVKRVL.

It belongs to the UPF0250 family.

The sequence is that of UPF0250 protein Sfri_0694 from Shewanella frigidimarina (strain NCIMB 400).